The following is a 339-amino-acid chain: DNA-directed RNA polymerase subunit alpha (339 aa).

An alpha N-terminal domain (alpha-NTD) region spans residues 1 to 233 (MVREEVAGST…DLFLPFLHAE (233 aa)). The alpha C-terminal domain (alpha-CTD) stretch occupies residues 264-339 (KKGIPLNCIF…IDLLKNKLSF (76 aa)).

Belongs to the RNA polymerase alpha chain family. As to quaternary structure, in plastids the minimal PEP RNA polymerase catalytic core is composed of four subunits: alpha, beta, beta', and beta''. When a (nuclear-encoded) sigma factor is associated with the core the holoenzyme is formed, which can initiate transcription.

It localises to the plastid. It is found in the chloroplast. The enzyme catalyses RNA(n) + a ribonucleoside 5'-triphosphate = RNA(n+1) + diphosphate. DNA-dependent RNA polymerase catalyzes the transcription of DNA into RNA using the four ribonucleoside triphosphates as substrates. This is DNA-directed RNA polymerase subunit alpha from Elymus californicus (California bottlebrush grass).